We begin with the raw amino-acid sequence, 95 residues long: Co-chaperonin GroES (95 aa).

The protein belongs to the GroES chaperonin family. As to quaternary structure, heptamer of 7 subunits arranged in a ring. Interacts with the chaperonin GroEL.

The protein localises to the cytoplasm. Together with the chaperonin GroEL, plays an essential role in assisting protein folding. The GroEL-GroES system forms a nano-cage that allows encapsulation of the non-native substrate proteins and provides a physical environment optimized to promote and accelerate protein folding. GroES binds to the apical surface of the GroEL ring, thereby capping the opening of the GroEL channel. The polypeptide is Co-chaperonin GroES (Desulfotalea psychrophila (strain LSv54 / DSM 12343)).